We begin with the raw amino-acid sequence, 434 residues long: MQVSVEATQGLERRLTISVPAEQIEKLVKDSLQREAKRARIPGFRPGKVPVTVINKRYGAAIRQDITGEVMQRNFIEAIIAEKLNPAGAPTFVPGATDGEKFEFVATFEIYPEVELKGLDAIEVEQPKASVTDADVDSMIETLRKQHATFAAVEREAADGDKVKMNFVGSVDGVEFEGGKADDFELQLGSGRMIPGFEAGILGHKAGEEFVIDVTFPEEYHAENLKGKAAKFAITLTEVLAANLPEVNDEFAALFGISEGGLEALKTEIRKNMNRELEQALKANVKEQVINGLLANNDIELPKALIDGEVNVLRQQAMQRFGGQTANMPELPAELFTEQAARRVKIGLLLGEVIKTNELKAEDERVQALIASMASAYEDPSEVVAYYNSNKELMQNMRNVALEEQAVEALLKSAKVTEKEVAFEEFMNKATGRA.

One can recognise a PPIase FKBP-type domain in the interval 160-245; it reads GDKVKMNFVG…LTEVLAANLP (86 aa).

Belongs to the FKBP-type PPIase family. Tig subfamily.

The protein resides in the cytoplasm. It catalyses the reaction [protein]-peptidylproline (omega=180) = [protein]-peptidylproline (omega=0). Functionally, involved in protein export. Acts as a chaperone by maintaining the newly synthesized protein in an open conformation. Functions as a peptidyl-prolyl cis-trans isomerase. The protein is Trigger factor of Shewanella sp. (strain MR-4).